Reading from the N-terminus, the 161-residue chain is Phosphopantetheine adenylyltransferase (161 aa).

S9 contacts substrate. ATP is bound by residues 9 to 10 (SF) and H17. Substrate-binding residues include K41, L73, and R87. ATP contacts are provided by residues 88–90 (GLR), E98, and 123–129 (YTFISSS).

Belongs to the bacterial CoaD family. As to quaternary structure, homohexamer. Mg(2+) is required as a cofactor.

Its subcellular location is the cytoplasm. The enzyme catalyses (R)-4'-phosphopantetheine + ATP + H(+) = 3'-dephospho-CoA + diphosphate. It participates in cofactor biosynthesis; coenzyme A biosynthesis; CoA from (R)-pantothenate: step 4/5. Functionally, reversibly transfers an adenylyl group from ATP to 4'-phosphopantetheine, yielding dephospho-CoA (dPCoA) and pyrophosphate. In Syntrophomonas wolfei subsp. wolfei (strain DSM 2245B / Goettingen), this protein is Phosphopantetheine adenylyltransferase.